The primary structure comprises 489 residues: Ketol-acid reductoisomerase (NADP(+)) (489 aa).

The 192-residue stretch at 16-207 folds into the KARI N-terminal Rossmann domain; the sequence is LRKCKLVEKN…GSHRAGVLHS (192 aa). NADP(+) is bound by residues 44–47, Arg-67, Ser-77, and 107–109; these read CGSQ and DKQ. His-131 is an active-site residue. Gly-157 contributes to the NADP(+) binding site. 2 consecutive KARI C-terminal knotted domains span residues 208 to 343 and 344 to 483; these read SFIA…KCKI and CHKE…MVDM. 4 residues coordinate Mg(2+): Asp-216, Glu-220, Glu-388, and Glu-392. Ser-413 is a substrate binding site.

The protein belongs to the ketol-acid reductoisomerase family. The cofactor is Mg(2+).

The catalysed reaction is (2R)-2,3-dihydroxy-3-methylbutanoate + NADP(+) = (2S)-2-acetolactate + NADPH + H(+). The enzyme catalyses (2R,3R)-2,3-dihydroxy-3-methylpentanoate + NADP(+) = (S)-2-ethyl-2-hydroxy-3-oxobutanoate + NADPH + H(+). It functions in the pathway amino-acid biosynthesis; L-isoleucine biosynthesis; L-isoleucine from 2-oxobutanoate: step 2/4. Its pathway is amino-acid biosynthesis; L-valine biosynthesis; L-valine from pyruvate: step 2/4. In terms of biological role, involved in the biosynthesis of branched-chain amino acids (BCAA). Catalyzes an alkyl-migration followed by a ketol-acid reduction of (S)-2-acetolactate (S2AL) to yield (R)-2,3-dihydroxy-isovalerate. In the isomerase reaction, S2AL is rearranged via a Mg-dependent methyl migration to produce 3-hydroxy-3-methyl-2-ketobutyrate (HMKB). In the reductase reaction, this 2-ketoacid undergoes a metal-dependent reduction by NADPH to yield (R)-2,3-dihydroxy-isovalerate. This Buchnera aphidicola subsp. Schlechtendalia chinensis protein is Ketol-acid reductoisomerase (NADP(+)).